Reading from the N-terminus, the 1023-residue chain is Transmembrane protein 132A (1023 aa).

The N-terminal stretch at 1–35 (MCARMAGRTTAAPRGPYGPWLCLLVALALDVVRVD) is a signal peptide. Residues 36-852 (CGQAPLDPVY…VTELELGMYA (817 aa)) are Extracellular-facing. The disordered stretch occupies residues 212 to 246 (AAEGPGGCGSGEENDPGEQALPVGGVELRPADPPQ). N-linked (GlcNAc...) asparagine glycosylation is present at Asn-280. Disordered stretches follow at residues 512–533 (WRVP…DEAE) and 766–839 (LPPA…MVPA). Over residues 515-527 (PGPAEGPAEPAAE) the composition is skewed to low complexity. Ser-529 carries the phosphoserine; by FAM20C modification. Positions 611–916 (IEVRSPLSDS…RQLDRQSPGP (306 aa)) are binds to HSPA5/GRP78. The segment at 671–1023 (LPAPKQEVAL…NYMERIRGSS (353 aa)) is confers cellular localization similar to full-length form. Over residues 778-790 (SSPAWSPPATEAT) the composition is skewed to low complexity. Basic and acidic residues predominate over residues 809 to 823 (GKFERAEEEARKEET). Residues 824–836 (EAREEEEEEEEEM) are compositionally biased toward acidic residues. The helical transmembrane segment at 853–873 (LLGVFCVAIFIFLVNGVVFVL) threads the bilayer. The Cytoplasmic portion of the chain corresponds to 874–1023 (RYQRKEPPDS…NYMERIRGSS (150 aa)). Positions 905-961 (LSRQLDRQSPGPPKGEGSCPCESGGGGEAPTLAPGPPGGTTSSSSTLARKEAGGRRK) are disordered.

It belongs to the TMEM132 family. In terms of assembly, interacts with HSPA5/GRP78.

It is found in the golgi apparatus membrane. It localises to the endoplasmic reticulum membrane. In terms of biological role, may play a role in embryonic and postnatal development of the brain. Increased resistance to cell death induced by serum starvation in cultured cells. Regulates cAMP-induced GFAP gene expression via STAT3 phosphorylation. This chain is Transmembrane protein 132A (TMEM132A), found in Homo sapiens (Human).